A 408-amino-acid polypeptide reads, in one-letter code: L-lactate oxidase (408 aa).

An FMN hydroxy acid dehydrogenase domain is found at Asn-14–Tyr-370. Tyr-40 is a binding site for pyruvate. Residues Pro-93–Ala-95, Ser-122, and Gln-144 contribute to the FMN site. Residue Tyr-146 coordinates pyruvate. Residue Thr-172 participates in FMN binding. Residue Arg-181 participates in pyruvate binding. Residues Lys-241 and Ser-263 each coordinate FMN. His-265 and Arg-268 together coordinate pyruvate. The Proton acceptor role is filled by His-265. FMN contacts are provided by residues Asp-296 to Arg-300 and Arg-320.

This sequence belongs to the FMN-dependent alpha-hydroxy acid dehydrogenase family. In terms of assembly, homotetramer. It depends on FMN as a cofactor.

It carries out the reaction a (2S)-2-hydroxycarboxylate + O2 = a 2-oxocarboxylate + H2O2. The enzyme catalyses (S)-lactate + O2 = pyruvate + H2O2. The catalysed reaction is 2-hydroxyoctanoate + O2 = 2-oxooctanoate + H2O2. It catalyses the reaction glycolate + O2 = glyoxylate + H2O2. It carries out the reaction mandelate + O2 = phenylglyoxylate + H2O2. The enzyme catalyses 2-hydroxyoctadecanoate + O2 = 2-oxooctadecanoate + H2O2. Its function is as follows. Oxidase that catalyzes the oxidation of a broad range of 2-hydroxyacids in vitro, such as (S)-lactate, 2-hydroxyoctanoate, and to a lesser extent glycolate, mandelate and 2-hydroxyoctadecanoate, to the corresponding 2-oxoacids, with a reduction of O2 to H2O2. May be involved in the utilization of L-lactate as an energy source for growth. The sequence is that of L-lactate oxidase from Lactobacillus jensenii.